The chain runs to 344 residues: BURP domain-containing protein 16 (344 aa).

The N-terminal stretch at 1-25 is a signal peptide; it reads MATSFLFSLILLLITALSLPFPLHA. Asn90, Asn120, Asn181, and Asn333 each carry an N-linked (GlcNAc...) asparagine glycan. The BURP domain maps to 128 to 341; that stretch reads FFREQELKEG…FNGSMTWVIA (214 aa).

As to expression, expressed in roots, stems, leaves and panicles.

This is BURP domain-containing protein 16 (BURP16) from Oryza sativa subsp. japonica (Rice).